Reading from the N-terminus, the 208-residue chain is Interferon epsilon (208 aa).

Positions 1 to 21 are cleaved as a signal peptide; it reads MIIKHFFGTVLVLLASTTIFS. The cysteines at positions 53 and 163 are disulfide-linked. N-linked (GlcNAc...) asparagine glycans are attached at residues asparagine 95 and asparagine 104.

Belongs to the alpha/beta interferon family. As to expression, endometrium-specific.

It localises to the secreted. In terms of biological role, type I interferon required for maintaining basal levels of IFN-regulated genes, including 2'-5'-oligoadenylate synthetase, IRF7 and ISG15, in the female reproductive tract. Directly mediates protection against viral and bacterial genital infections. The sequence is that of Interferon epsilon (IFNE) from Homo sapiens (Human).